We begin with the raw amino-acid sequence, 69 residues long: Lantibiotic lichenicidin A2 (69 aa).

The propeptide occupies 1 to 37; that stretch reads MKNSAAREAFKGANHPAGMVSEEELKALVGGNDVNPE. A 2-oxobutanoic acid modification is found at threonine 38. A (Z)-2,3-didehydrobutyrine mark is found at threonine 39, threonine 42, and threonine 43. A cross-link (lanthionine (Ser-Cys)) is located at residues 44 to 48; the sequence is SSWTC. Serine 45 carries the post-translational modification 2,3-didehydroalanine (Ser). Residues threonine 50 and threonine 54 each carry the (Z)-2,3-didehydrobutyrine modification. The segment at residues 56-60 is a cross-link (lanthionine (Ser-Cys)); the sequence is SASLC. 2 cross-links (beta-methyllanthionine (Thr-Cys)) span residues 62–65 and 66–69; these read TTKC and TSRC. (Z)-2,3-didehydrobutyrine is present on threonine 63.

In terms of processing, maturation of lantibiotics involves the enzymatic conversion of Thr, and Ser into dehydrated AA and the formation of thioether bonds with cysteine. This is followed by membrane translocation and cleavage of the modified precursor.

The protein localises to the secreted. Its subcellular location is the cell wall. Functionally, lanthionine-containing peptide antibiotic (lantibiotic) active on Gram-positive bacteria. The bactericidal activity of lantibiotics is based on depolarization of energized bacterial cytoplasmic membranes, initiated by the formation of aqueous transmembrane pores. When present individually, LchA2 exhibits activity towards L.lactis HP. When combined with LchA1, it displays activity towards a broad spectrum of non-pathogenic and pathogenic Gram-positive bacteria including strains of L.monocytogenes, methicillin-resistant S.aureus, S.pneumoniae and strains of vancomycin-resistant enterococci, but not towards E.faecium L4001 and BM4147-1. Combined LchA1 and LchA2 peptides also inhibit Bacillus sp. HIL-Y85/54728, L.lactis DPC3417 and B.halodurans C-125, which produce lantibiotics themselves. Inactivated by proteinase K and pronase E, but not by trypsin and chymotrypsin. This Bacillus licheniformis (strain ATCC 14580 / DSM 13 / JCM 2505 / CCUG 7422 / NBRC 12200 / NCIMB 9375 / NCTC 10341 / NRRL NRS-1264 / Gibson 46) protein is Lantibiotic lichenicidin A2.